We begin with the raw amino-acid sequence, 414 residues long: CCA-adding enzyme (414 aa).

2 residues coordinate ATP: glycine 8 and arginine 11. Positions 8 and 11 each coordinate CTP. 2 residues coordinate Mg(2+): aspartate 21 and aspartate 23. The ATP site is built by arginine 92, arginine 138, and arginine 141. Arginine 92, arginine 138, and arginine 141 together coordinate CTP.

The protein belongs to the tRNA nucleotidyltransferase/poly(A) polymerase family. Bacterial CCA-adding enzyme type 2 subfamily. Mg(2+) serves as cofactor.

The catalysed reaction is a tRNA precursor + 2 CTP + ATP = a tRNA with a 3' CCA end + 3 diphosphate. It catalyses the reaction a tRNA with a 3' CCA end + 2 CTP + ATP = a tRNA with a 3' CCACCA end + 3 diphosphate. Functionally, catalyzes the addition and repair of the essential 3'-terminal CCA sequence in tRNAs without using a nucleic acid template. Adds these three nucleotides in the order of C, C, and A to the tRNA nucleotide-73, using CTP and ATP as substrates and producing inorganic pyrophosphate. tRNA 3'-terminal CCA addition is required both for tRNA processing and repair. Also involved in tRNA surveillance by mediating tandem CCA addition to generate a CCACCA at the 3' terminus of unstable tRNAs. While stable tRNAs receive only 3'-terminal CCA, unstable tRNAs are marked with CCACCA and rapidly degraded. This Buchnera aphidicola subsp. Cinara cedri (strain Cc) protein is CCA-adding enzyme.